The sequence spans 987 residues: Pentatricopeptide repeat-containing protein At1g06710, mitochondrial (987 aa).

The N-terminal 42 residues, 1–42, are a transit peptide targeting the mitochondrion; it reads MNKTVVRCLLSRSHHPLIHFSTNLSLLHRVFTCSRYLTARFM. PPR repeat units follow at residues 164-198, 199-233, 234-268, 269-299, 301-335, 336-370, 371-405, 406-446, 447-481, 482-516, 517-551, 552-586, 587-621, 638-672, 673-707, 708-742, 743-777, 778-812, 813-847, 881-915, 918-952, and 953-987; these read TAPVYNALVDLIVRDDDEKVPEEFLQQIRDDDKEV, FGEFLNVLVRKHCRNGSFSIALEELGRLKDFRFRP, SRSTYNCLIQAFLKADRLDSASLIHREMSLANLRM, DGFTLRCFAYSLCKVGKWREALTLVETENFV, DTVFYTKLISGLCEASLFEEAMDFLNRMRATSCLP, NVVTYSTLLCGCLNKKQLGRCKRVLNMMMMEGCYP, SPKIFNSLVHAYCTSGDHSYAYKLLKKMVKCGHMP, GYVV…GVVL, NKINVSSFTRCLCSAGKYEKAFSVIREMIGQGFIP, DTSTYSKVLNYLCNASKMELAFLLFEEMKRGGLVA, DVYTYTIMVDSFCKAGLIEQARKWFNEMREVGCTP, NVVTYTALIHAYLKAKKVSYANELFETMLSEGCLP, NIVTYSALIDGHCKAGQVEKACQIFERMCGSKDVP, NVVTYGALLDGFCKSHRVEEARKLLDAMSMEGCEP, NQIVYDALIDGLCKVGKLDEAQEVKTEMSEHGFPA, TLYTYSSLIDRYFKVKRQDLASKVLSKMLENSCAP, NVVIYTEMIDGLCKVGKTDEAYKLMQMMEEKGCQP, NVVTYTAMIDGFGMIGKIETCLELLERMGSKGVAP, NYVTYRVLIDHCCKNGALDVAHNLLEEMKQTHWPT, FLSVYRLLIDNLIKAQRLEMALRLLEEVATFSATL, YSSTYNSLIESLCLANKVETAFQLFSEMTKKGVIP, and EMQSFCSLIKGLFRNSKISEALLLLDFISHMVCPL.

Belongs to the PPR family. P subfamily.

The protein resides in the mitochondrion. This Arabidopsis thaliana (Mouse-ear cress) protein is Pentatricopeptide repeat-containing protein At1g06710, mitochondrial.